A 529-amino-acid chain; its full sequence is Chaperonin GroEL, chloroplastic (529 aa).

Residues 29 to 32 (TLGP), 86 to 90 (DGTTT), Gly-414, 480 to 482 (DAA), and Asp-496 each bind ATP.

Belongs to the chaperonin (HSP60) family. Forms a cylinder of 14 subunits composed of two heptameric rings stacked back-to-back. Interacts with the co-chaperonin GroES.

The protein resides in the plastid. It is found in the chloroplast. It carries out the reaction ATP + H2O + a folded polypeptide = ADP + phosphate + an unfolded polypeptide.. In terms of biological role, together with its co-chaperonin GroES, plays an essential role in assisting protein folding. The GroEL-GroES system forms a nano-cage that allows encapsulation of the non-native substrate proteins and provides a physical environment optimized to promote and accelerate protein folding. The sequence is that of Chaperonin GroEL, chloroplastic from Guillardia theta (Cryptophyte).